Consider the following 278-residue polypeptide: MIKLGSHISFKSPNYLLGAAAESVNNKANCMMIYLGAPQTTKRVSVEKYKYNEYLEKYSKLITPDDIIVHAPYIVNPSSVSKNKFAIDFLVQEIEKMNYIGAKYLVLHPGSYTTFSVQESLDTFIASVKQILSRTKDVVICVETMAGKGAEVGINFDQINYFIHKIRNDRFAVCLDTCHIFDAGYDIRKYEEFKAEINKYNLLPHIKVIHLNDSKNSLGSHKDRHANIDKGFIGLETLAKFVHDPDFDNIPIILETPWVDNKPIYDQEIKMLLEHKAK.

Residues H70, H108, E143, D176, H179, H210, D223, H225, and E255 each coordinate Zn(2+).

This sequence belongs to the AP endonuclease 2 family. The cofactor is Zn(2+).

The enzyme catalyses Endonucleolytic cleavage to 5'-phosphooligonucleotide end-products.. Functionally, endonuclease IV plays a role in DNA repair. It cleaves phosphodiester bonds at apurinic or apyrimidinic (AP) sites, generating a 3'-hydroxyl group and a 5'-terminal sugar phosphate. This chain is Probable endonuclease 4, found in Mycoplasmopsis agalactiae (strain NCTC 10123 / CIP 59.7 / PG2) (Mycoplasma agalactiae).